Reading from the N-terminus, the 163-residue chain is MNGETLQRIVEEIVSRLHRRAQSTATLSVTQLRDADCPALFCQHASLRILLIDLPLLGQLADAETGDAAARKIHDALAFGIRVQLSLHSQLLPVIPVKKLARLPLVFTDEHGLPLVLHAGSVLSYRDVALLSRGRVVVHRKCIVTAMARDAANARNIQLIKQE.

This sequence belongs to the PduM family. Interacts with shell protein PduK.

The protein resides in the bacterial microcompartment. It participates in polyol metabolism; 1,2-propanediol degradation. Plays an essential role in assembly and/or stability of the bacterial microcompartment (BMC) dedicated to 1,2-propanediol (1,2-PD) degradation. Overexpression impairs BMC formation. Functionally, the 1,2-PD-specific bacterial microcompartment (BMC) concentrates low levels of 1,2-PD catabolic enzymes, concentrates volatile reaction intermediates thus enhancing pathway flux and keeps the level of toxic, mutagenic propionaldehyde low. The protein is Bacterial microcompartment assembly protein PduM of Salmonella typhimurium (strain LT2 / SGSC1412 / ATCC 700720).